A 580-amino-acid polypeptide reads, in one-letter code: Membrane protein insertase YidC (580 aa).

Transmembrane regions (helical) follow at residues 5–25 (SVTGLALIALIMIVWLQFMSP), 259–279 (KYFVAALIPAGPTGGFYLDGS), 362–382 (GLIIIIFAFLIKLVTYPLSLA), 427–447 (LGGCLPVVLQMPLLFAMFYVF), 477–497 (IPMYGDHIALMPILMAGTVFV), and 513–533 (IMLYMFPAMMLLFFNNMPSGL).

Belongs to the OXA1/ALB3/YidC family. Type 1 subfamily. Interacts with the Sec translocase complex via SecD. Specifically interacts with transmembrane segments of nascent integral membrane proteins during membrane integration.

Its subcellular location is the cell inner membrane. In terms of biological role, required for the insertion and/or proper folding and/or complex formation of integral membrane proteins into the membrane. Involved in integration of membrane proteins that insert both dependently and independently of the Sec translocase complex, as well as at least some lipoproteins. Aids folding of multispanning membrane proteins. In Chlorobium phaeovibrioides (strain DSM 265 / 1930) (Prosthecochloris vibrioformis (strain DSM 265)), this protein is Membrane protein insertase YidC.